A 2427-amino-acid polypeptide reads, in one-letter code: Interferon-induced very large GTPase 1 (2427 aa).

Positions 1485–1726 (DKRLFVLSVL…KISDFKFRVQ (242 aa)) constitute a VLIG-type G domain. GTP-binding positions include 1495-1502 (GLQSSGKS), 1548-1551 (DTEG), and 1625-1628 (TAKD).

It belongs to the TRAFAC class dynamin-like GTPase superfamily. Very large inducible GTPase (VLIG) family. Widely expressed. Expressed at low basal level in lung, heart, thymus and spleen; at still lower level in liver, ovary, kidney and brain. Expressed at very weak level in testis. Undetectable in embryo.

The protein resides in the cytoplasm. Its subcellular location is the cytosol. It is found in the nucleus. This Mus musculus (Mouse) protein is Interferon-induced very large GTPase 1 (Gvin1).